The following is a 250-amino-acid chain: 3-deoxy-manno-octulosonate cytidylyltransferase (250 aa).

The protein belongs to the KdsB family.

The protein resides in the cytoplasm. It carries out the reaction 3-deoxy-alpha-D-manno-oct-2-ulosonate + CTP = CMP-3-deoxy-beta-D-manno-octulosonate + diphosphate. Its pathway is nucleotide-sugar biosynthesis; CMP-3-deoxy-D-manno-octulosonate biosynthesis; CMP-3-deoxy-D-manno-octulosonate from 3-deoxy-D-manno-octulosonate and CTP: step 1/1. It participates in bacterial outer membrane biogenesis; lipopolysaccharide biosynthesis. In terms of biological role, activates KDO (a required 8-carbon sugar) for incorporation into bacterial lipopolysaccharide in Gram-negative bacteria. This is 3-deoxy-manno-octulosonate cytidylyltransferase from Pectobacterium atrosepticum (strain SCRI 1043 / ATCC BAA-672) (Erwinia carotovora subsp. atroseptica).